We begin with the raw amino-acid sequence, 369 residues long: Aspartate beta-hydroxylase domain-containing protein 2 (369 aa).

Over 1 to 58 (MVWAPLGPPRTDCLTLLHTPSKDSPKMSLEWLVAWSWSLDGLRDCIATGIQSVRDCDT) the chain is Cytoplasmic. A helical membrane pass occupies residues 59–79 (TAVITVACLLVLFVWYCYHVG). Topologically, residues 80 to 369 (REQPRPYVSV…ALDFIFAPGR (290 aa)) are lumenal. An N-linked (GlcNAc...) asparagine glycan is attached at Asn-211. 2-oxoglutarate contacts are provided by Trp-228 and Ser-272. His-283 lines the Fe cation pocket. 292–294 (RCH) provides a ligand contact to 2-oxoglutarate. A Fe cation-binding site is contributed by His-328. Arg-341 lines the 2-oxoglutarate pocket.

The protein belongs to the aspartyl/asparaginyl beta-hydroxylase family. Fe cation is required as a cofactor.

It is found in the membrane. Its function is as follows. May function as 2-oxoglutarate-dependent dioxygenase. The sequence is that of Aspartate beta-hydroxylase domain-containing protein 2 (ASPHD2) from Homo sapiens (Human).